Consider the following 435-residue polypeptide: Glucoside xylosyltransferase 1 (435 aa).

Residues 1–6 are Cytoplasmic-facing; the sequence is MRRYLR. The helical; Signal-anchor for type II membrane protein transmembrane segment at 7–29 threads the bilayer; sequence VVGLCLACGFCSLLYAFSQLAVS. At 30–435 the chain is on the lumenal side; the sequence is LEEGAAVGRR…NRYDTPPKER (406 aa). Asn-168 and Asn-232 each carry an N-linked (GlcNAc...) asparagine glycan.

This sequence belongs to the glycosyltransferase 8 family.

Its subcellular location is the membrane. It carries out the reaction 3-O-(beta-D-glucosyl)-L-seryl-[EGF-like domain protein] + UDP-alpha-D-xylose = 3-O-[alpha-D-xylosyl-(1-&gt;3)-beta-D-glucosyl]-L-seryl-[EGF-like domain protein] + UDP + H(+). Glycosyltransferase which elongates the O-linked glucose attached to EGF-like repeats in the extracellular domain of Notch proteins by catalyzing the addition of xylose. In Rattus norvegicus (Rat), this protein is Glucoside xylosyltransferase 1 (Gxylt1).